The following is a 261-amino-acid chain: MVVGGGGEGDQKRSSGEMMAMASLFNDQQNPIQQFQVKFKEVETNFKTWLSKQSIPVEAAVVSTMSGVQGAFIGGLMGTLSPEMPQAGVDPQAIASMKQAQALVGGPWVQARNFAAITGVNAGIASVMKRIRGKEDIESAVVAALGSGFAYSLVSQGLQGQPMNAITTAAGFAVFQGVFFKLGERFSKPSTEDPFFTRGRTMLVKLGLEKYEKNFKKGLLTDPTLPLLTDSALKDANIPPGPRLMILDHIQRDPEIKGKRK.

A run of 4 helical transmembrane segments spans residues 59 to 77, 113 to 129, 139 to 155, and 163 to 180; these read AAVVSTMSGVQGAFIGGLM, NFAAITGVNAGIASVMK, SAVVAALGSGFAYSLVS, and MNAITTAAGFAVFQGVFF.

It belongs to the Tim17/Tim22/Tim23 family. Probable component of a protein-conducting channel made of HP30-1, HP30-2 and HP20 that mediates the import of transit sequence-less proteins into the chloroplastic inner membrane. Interacts with CEQORH.

Its subcellular location is the plastid. The protein resides in the chloroplast inner membrane. Together with HP30-2 and HP20, triggers the import and insertion of transit sequence-less multi-pass transmembrane proteins (e.g. CEQORH) into the chloroplastic inner membrane. The chain is Chloroplastic import inner membrane translocase subunit HP30-1 from Arabidopsis thaliana (Mouse-ear cress).